Reading from the N-terminus, the 310-residue chain is Glutaminase 1 (310 aa).

Substrate-binding residues include Ser-66, Asn-117, Glu-161, Asn-168, Tyr-192, Tyr-244, and Val-262. Lys-294 carries the N6-acetyllysine modification.

Belongs to the glutaminase family. As to quaternary structure, homotetramer.

It carries out the reaction L-glutamine + H2O = L-glutamate + NH4(+). In Escherichia coli (strain K12), this protein is Glutaminase 1.